Consider the following 573-residue polypeptide: Glucocorticoid modulatory element-binding protein 1 (573 aa).

At Ala2 the chain carries N-acetylalanine. The SAND domain occupies Thr82 to Asp166. Cys113 provides a ligand contact to Zn(2+). 4 residues coordinate DNA: Lys139, Lys143, Lys146, and Arg157. His170, Cys174, and Cys178 together coordinate Zn(2+). Positions Leu321–Val367 form a coiled coil. A disordered region spans residues Pro370–Gln398.

Homodimer, and heterodimer of GMEB1 and GMEB2. GMEB1 and GMEB2 form the parvovirus initiator complex (PIF). Interacts with the glucocorticoid receptor (NR3C1) and NCOA2/TIF2. May interact with HSP27 and CREB-binding protein (CBP).

It localises to the nucleus. Its subcellular location is the cytoplasm. In terms of biological role, trans-acting factor that binds to glucocorticoid modulatory elements (GME) present in the TAT (tyrosine aminotransferase) promoter and increases sensitivity to low concentrations of glucocorticoids. Also binds to the transferrin receptor promoter. Essential auxiliary factor for the replication of parvoviruses. The sequence is that of Glucocorticoid modulatory element-binding protein 1 (GMEB1) from Homo sapiens (Human).